A 404-amino-acid polypeptide reads, in one-letter code: Growth/differentiation factor 6-A (404 aa).

The signal sequence occupies residues 1–24 (MDALRAVAFYALFVFLWSLPCCQS). The propeptide occupies 25–284 (AALISQKRSK…LQFKARRRRR (260 aa)). Residue Asn91 is glycosylated (N-linked (GlcNAc...) asparagine). Positions 263–304 (KSRGDDDEEESALQFKARRRRRTALNNRHGKRHGKKSKSRCS) are disordered. Over residues 278-304 (KARRRRRTALNNRHGKRHGKKSKSRCS) the composition is skewed to basic residues. 3 cysteine pairs are disulfide-bonded: Cys303-Cys369, Cys332-Cys401, and Cys336-Cys403.

This sequence belongs to the TGF-beta family. In terms of assembly, homodimer; disulfide-linked. First expressed in late gastrula stage embryos (9.5 hours post fertilization (hpf)) in anterior neuroectoderm corresponding to the future dorsal part of the brain. Shortly after tailbud formation (11 hpf), expression expands to the entire neural region and is subsequently expressed in derivatives of the lateral neural plate and migrating neural crest cells, with the future midbrain and hindbrain showing strong expression. Also expressed weakly and transiently in the posterior embryo from 11.5 hpf to 15 hpf in the lateral mesoderm, and in ectoderm above the neural keel. At 14 hpf, expressed along the entire length of the embryo and starting around the 16-somite stage, expressed in the dorsal quadrant of the retina, representing the distal tip of the eye anlage. At this stage, also expressed in the hatching gland and the hypochord. At 24 hpf, expressed in the roof plate outlining the fourth brain ventricle, in the posterior hypochord, the primitive gut endoderm, the ventral tail mesenchyme, the dorsal part of the neural tube and the dorsal fin. Weakly expressed in the dorsal part of the posterior spinal cord and in blood cell precursors.

It localises to the secreted. In terms of biological role, growth factor that controls proliferation and cellular differentiation in the retina. Plays a key role in regulating apoptosis during retinal development. Establishes dorsal-ventral positional information in the retina and controls the formation of the retinotectal map. Functions maternally in dorsal/ventral patterning to induce the expression of the zygotic bmp2b and bmp4 genes and ventralize embryos. Zygotic expression does not appear to regulate axis specification, but instead functions to establish the integrity of the axial vessels during embryonic development. May be involved in maintaining the identity of cells of the dorsal-most neural tube and of at least a subset of neural crest cells. This chain is Growth/differentiation factor 6-A (gdf6a), found in Danio rerio (Zebrafish).